A 295-amino-acid chain; its full sequence is Cyclin-G1 (295 aa).

This sequence belongs to the cyclin family. Cyclin G subfamily.

The protein resides in the nucleus. Its function is as follows. May play a role in growth regulation. Is associated with G2/M phase arrest in response to DNA damage. May be an intermediate by which p53 mediates its role as an inhibitor of cellular proliferation. This is Cyclin-G1 (CCNG1) from Bos taurus (Bovine).